A 413-amino-acid polypeptide reads, in one-letter code: BSD domain-containing protein 1-A (413 aa).

The BSD domain maps to 146 to 198; sequence WLAYWDPEQRKAEISELLVTSPSIRALFTKMVPAAVSHSEFWQRYFYKVHQLE. Basic and acidic residues-rich tracts occupy residues 208 to 219 and 255 to 271; these read KQRADQSVHSEE and HVED…RDHT. Disordered stretches follow at residues 208-228 and 255-386; these read KQRA…EEED and HVED…EFDM. The span at 274–287 shows a compositional bias: low complexity; the sequence is TSPSESSESISPIT. A compositionally biased stretch (polar residues) spans 297–322; it reads QTPSKEPSPGTLTVTKENTGAGTDET. Positions 342–352 are enriched in basic and acidic residues; it reads QREDPPSDLRV. Over residues 356 to 375 the composition is skewed to polar residues; sequence NSDSGKSTPSNNGQKGSSTD. Residues 376–386 show a composition bias toward acidic residues; sequence ISEDWEKEFDM.

The protein is BSD domain-containing protein 1-A (bsdc1-a) of Xenopus laevis (African clawed frog).